A 130-amino-acid chain; its full sequence is Ribonuclease VapC4 (130 aa).

In terms of domain architecture, PINc spans 7 to 130 (LADTSVFIGI…AMPDVEVITI (124 aa)). Mg(2+) is bound by residues Asp9 and Asp98.

Belongs to the PINc/VapC protein family. Interacts with cognate antitoxin VapB4. It depends on Mg(2+) as a cofactor.

It localises to the secreted. Functionally, toxic component of a type II toxin-antitoxin (TA) system. Probably exerts its toxic effect by binding to mRNA, inhibiting translation. Binds to, recognizes and cleaves ssRNA at ACGC and AC(A/U)GC sequences, usually between the G and C; cleavage is not very efficient, nor is cleavage required to inhibit protein synthesis. Upon expression in situ, in M.smegmatis or E.coli inhibits cell growth and colony formation; in at least E.coli also causes increased levels of cellular RNA. Its toxic effect is neutralized by coexpression with cognate antitoxin VapB4. The polypeptide is Ribonuclease VapC4 (Mycobacterium tuberculosis (strain ATCC 25618 / H37Rv)).